A 302-amino-acid polypeptide reads, in one-letter code: Catechol 1,2-dioxygenase (302 aa).

Tyrosine 164, tyrosine 198, histidine 222, and histidine 224 together coordinate Fe cation.

Belongs to the intradiol ring-cleavage dioxygenase family. It depends on Fe(3+) as a cofactor.

The catalysed reaction is catechol + O2 = cis,cis-muconate + 2 H(+). The protein operates within aromatic compound metabolism; beta-ketoadipate pathway; 5-oxo-4,5-dihydro-2-furylacetate from catechol: step 1/3. This is Catechol 1,2-dioxygenase (pheB) from Pseudomonas sp. (strain EST1001).